Reading from the N-terminus, the 203-residue chain is SPbeta prophage-derived uncharacterized protein YouA (203 aa).

Residues 1–23 (MAFLNQDGDKYTSAKDDGTGNPI) are disordered. The span at 7–18 (DGDKYTSAKDDG) shows a compositional bias: basic and acidic residues.

This chain is SPbeta prophage-derived uncharacterized protein YouA (youA), found in Bacillus subtilis (strain 168).